The primary structure comprises 347 residues: N-acetyl-gamma-glutamyl-phosphate reductase (347 aa).

The active site involves C152.

This sequence belongs to the NAGSA dehydrogenase family. Type 1 subfamily.

The protein resides in the cytoplasm. The catalysed reaction is N-acetyl-L-glutamate 5-semialdehyde + phosphate + NADP(+) = N-acetyl-L-glutamyl 5-phosphate + NADPH + H(+). It participates in amino-acid biosynthesis; L-arginine biosynthesis; N(2)-acetyl-L-ornithine from L-glutamate: step 3/4. In terms of biological role, catalyzes the NADPH-dependent reduction of N-acetyl-5-glutamyl phosphate to yield N-acetyl-L-glutamate 5-semialdehyde. The protein is N-acetyl-gamma-glutamyl-phosphate reductase of Neisseria gonorrhoeae (strain ATCC 700825 / FA 1090).